Consider the following 117-residue polypeptide: Virion membrane protein A21 (117 aa).

A helical; Signal-anchor for type III membrane protein membrane pass occupies residues 1–21 (MITLFLILCYFILIFNIIVPA). Residues 22 to 117 (ISEKMRRERA…RAYSDLFFTT (96 aa)) are Virion surface-facing.

The protein belongs to the chordopoxvirinae A21 family. Envelope protein part of a stable entry-fusion complex (EFC) which is at least composed of proteins A16, A21, A28, G3, G9, H2, J5, and L5. Formation of the viral membrane is necessary for the assembly of the complex. Post-translationally, contains two intramolecular disulfide bonds. They are created by the viral disulfide bond formation pathway, a poxvirus-specific pathway that operates on the cytoplasmic side of the MV membranes.

Its subcellular location is the virion membrane. Envelope protein part of the entry-fusion complex responsible for the virus membrane fusion with host cell membrane during virus entry. The chain is Virion membrane protein A21 from Vaccinia virus (strain Ankara) (VACV).